Consider the following 347-residue polypeptide: KIN17-like protein KLP (347 aa).

A Nuclear localization signal (NLS) motif is present at residues 222–225 (KRKR).

The protein belongs to the KIN17 family.

The protein localises to the cytoplasm. It is found in the nucleus. Its function is as follows. May act as repressor of root growth during copper excess and of hypocotyl growth in the dark. The protein is KIN17-like protein KLP of Arabidopsis thaliana (Mouse-ear cress).